Here is a 575-residue protein sequence, read N- to C-terminus: MAEKGKTNSSYWSTTRNDNSTVNTYIDTPAGKTHIWLLIATTMHTILSFIIMILCIDLIIKQDTCMKTNIMTVSSMNESAKTIKETITELIRQEVISRTINIQSSVQSGIPILLNKQSRDLTQLIEKSCNRQELAQICENTIAIHHADGISPLDPHDFWRCPVGEPLLSNNPNISLLPGPSLLSGSTTISGCVRLPSLSIGDAIYAYSSNLITQGCADIGKSYQVLQLGYISLNSDMYPDLKPVISHTYDINDNRKSCSVIAAGTRGYQLCSLPTVNETTDYSSEGIEDLVFDILDLKGKTKSHRYKNEDITFDHPFSAMYPSVGSGIKIENTLIFLGYGGLTTPLQGDTKCVTNRCANVNQSVCNDALKITWLKKRQVVNVLIRINNYLSDRPKIVVETIPITQNYLGAEGRLLKLGKKIYIYTRSSGWHSHLQIGSLDINNPMTIKWAPHEVLSRPGNQDCNWYNRCPRECISGVYTDAYPLSPDAVNVATTTLYANTSRVNPTIMYSNTSEIINMLRLKNVQLEAAYTTTSCITHFGKGYCFHIVEINQTSLNTLQPMLFKTSIPKICKITS.

The Intravirion segment spans residues 1 to 34; that stretch reads MAEKGKTNSSYWSTTRNDNSTVNTYIDTPAGKTH. The chain crosses the membrane as a helical span at residues 35-55; it reads IWLLIATTMHTILSFIIMILC. At 56-575 the chain is on the virion surface side; sequence IDLIIKQDTC…SIPKICKITS (520 aa). N77 carries N-linked (GlcNAc...) asparagine; by host glycosylation. 4 disulfide bridges follow: C192-C216, C258-C271, C357-C469, and C463-C473. The segment at 254 to 259 is involved in neuraminidase activity; it reads NRKSCS. N499 and N511 each carry an N-linked (GlcNAc...) asparagine; by host glycan. C535 and C544 are disulfide-bonded.

The protein belongs to the paramyxoviruses hemagglutinin-neuraminidase family. In terms of assembly, homotetramer; composed of disulfide-linked homodimers. Interacts with F protein trimer.

The protein resides in the virion membrane. It is found in the host cell membrane. It carries out the reaction Hydrolysis of alpha-(2-&gt;3)-, alpha-(2-&gt;6)-, alpha-(2-&gt;8)- glycosidic linkages of terminal sialic acid residues in oligosaccharides, glycoproteins, glycolipids, colominic acid and synthetic substrates.. Attaches the virus to sialic acid-containing cell receptors and thereby initiating infection. Binding of HN protein to the receptor induces a conformational change that allows the F protein to trigger virion/cell membranes fusion. Functionally, neuraminidase activity ensures the efficient spread of the virus by dissociating the mature virions from the neuraminic acid containing glycoproteins. The sequence is that of Hemagglutinin-neuraminidase (HN) from Human parainfluenza 1 virus (strain Washington/1957) (HPIV-1).